The primary structure comprises 133 residues: Profilin-2 (133 aa).

Residues Cys-13 and Cys-117 are joined by a disulfide bond. Positions 83-99 match the Involved in PIP2 interaction motif; sequence AVIRGKKGSGGITIKKT. Thr-113 bears the Phosphothreonine mark.

Belongs to the profilin family. As to quaternary structure, occurs in many kinds of cells as a complex with monomeric actin in a 1:1 ratio. Post-translationally, phosphorylated by MAP kinases.

It localises to the cytoplasm. It is found in the cytoskeleton. Its function is as follows. Binds to actin and affects the structure of the cytoskeleton. At high concentrations, profilin prevents the polymerization of actin, whereas it enhances it at low concentrations. This chain is Profilin-2, found in Betula pendula (European white birch).